Consider the following 1515-residue polypeptide: Glutamate synthase [NADPH] large chain (1515 aa).

Residues 1–36 constitute a propeptide that is removed on maturation; the sequence is MTTELNQGEQFVADFRANAAALTTANAYNPEDEHDA. The active-site For GATase activity is the Cys37. Residues 37–432 form the Glutamine amidotransferase type-2 domain; that stretch reads CGVGFIAAID…PGEMIAVDLQ (396 aa). The disordered stretch occupies residues 916 to 937; that stretch reads AKSDSGEGGEDPARFRPDKNGD. The span at 926-936 shows a compositional bias: basic and acidic residues; the sequence is DPARFRPDKNG. FMN is bound by residues 1085 to 1142 and 1086 to 1142; these read LSEV…IMVR and SEVH…IMVR. Positions 1138, 1144, and 1149 each coordinate [3Fe-4S] cluster.

Belongs to the glutamate synthase family. In terms of assembly, aggregate of 4 catalytic active heterodimers, consisting of a large and a small subunit. [3Fe-4S] cluster is required as a cofactor. Requires FAD as cofactor. It depends on FMN as a cofactor.

It catalyses the reaction 2 L-glutamate + NADP(+) = L-glutamine + 2-oxoglutarate + NADPH + H(+). The protein operates within amino-acid biosynthesis; L-glutamate biosynthesis via GLT pathway; L-glutamate from 2-oxoglutarate and L-glutamine (NADP(+) route): step 1/1. It participates in energy metabolism; nitrogen metabolism. This chain is Glutamate synthase [NADPH] large chain (gltB), found in Azospirillum brasilense.